Here is a 170-residue protein sequence, read N- to C-terminus: Adenine phosphoribosyltransferase (170 aa).

The protein belongs to the purine/pyrimidine phosphoribosyltransferase family. Homodimer.

The protein resides in the cytoplasm. The catalysed reaction is AMP + diphosphate = 5-phospho-alpha-D-ribose 1-diphosphate + adenine. It participates in purine metabolism; AMP biosynthesis via salvage pathway; AMP from adenine: step 1/1. Functionally, catalyzes a salvage reaction resulting in the formation of AMP, that is energically less costly than de novo synthesis. The protein is Adenine phosphoribosyltransferase of Geobacillus kaustophilus (strain HTA426).